An 895-amino-acid chain; its full sequence is Catenin alpha-3 (895 aa).

The stretch at 74 to 107 forms a coiled coil; the sequence is EMIAKEATVLKEELAAALQEVRKESKALKVSAER. Ser160 carries the post-translational modification Phosphoserine. Positions 325–379 form a coiled coil; that stretch reads RERIIAECNAIRQALQDLLTEYMSNTGKTERSNTLNTAIVNMSKKTRDLRRQLRK. Position 361 is a phosphothreonine (Thr361). The tract at residues 635-660 is disordered; it reads DVSDLEDDHEVRSHTSIQTEGKTDRA. Residues Ser637 and Ser647 each carry the phosphoserine modification. Thr649 carries the phosphothreonine modification.

The protein belongs to the vinculin/alpha-catenin family. Interacts with CTNNB1. Interacts with PKP2. In terms of tissue distribution, expressed in heart (at protein level).

Its subcellular location is the cytoplasm. The protein resides in the cytoskeleton. It is found in the cell junction. It localises to the desmosome. May be involved in formation of stretch-resistant cell-cell adhesion complexes. The chain is Catenin alpha-3 from Mus musculus (Mouse).